The chain runs to 347 residues: GMP reductase (347 aa).

108 to 131 (NDFLKLQRILALSPALRFICVDVA) serves as a coordination point for NADP(+). Gly181 and Gly183 together coordinate K(+). Cys186 functions as the Thioimidate intermediate in the catalytic mechanism. 216–239 (IVGDGGCTCPGDVAKAFGGGADFV) lines the NADP(+) pocket.

It belongs to the IMPDH/GMPR family. GuaC type 1 subfamily. In terms of assembly, homotetramer.

The enzyme catalyses IMP + NH4(+) + NADP(+) = GMP + NADPH + 2 H(+). Functionally, catalyzes the irreversible NADPH-dependent deamination of GMP to IMP. It functions in the conversion of nucleobase, nucleoside and nucleotide derivatives of G to A nucleotides, and in maintaining the intracellular balance of A and G nucleotides. The protein is GMP reductase of Tolumonas auensis (strain DSM 9187 / NBRC 110442 / TA 4).